The sequence spans 303 residues: UDP-3-O-acyl-N-acetylglucosamine deacetylase (303 aa).

Zn(2+) is bound by residues histidine 77, histidine 236, and aspartate 240. Histidine 263 functions as the Proton donor in the catalytic mechanism.

Belongs to the LpxC family. Requires Zn(2+) as cofactor.

The catalysed reaction is a UDP-3-O-[(3R)-3-hydroxyacyl]-N-acetyl-alpha-D-glucosamine + H2O = a UDP-3-O-[(3R)-3-hydroxyacyl]-alpha-D-glucosamine + acetate. The protein operates within glycolipid biosynthesis; lipid IV(A) biosynthesis; lipid IV(A) from (3R)-3-hydroxytetradecanoyl-[acyl-carrier-protein] and UDP-N-acetyl-alpha-D-glucosamine: step 2/6. In terms of biological role, catalyzes the hydrolysis of UDP-3-O-myristoyl-N-acetylglucosamine to form UDP-3-O-myristoylglucosamine and acetate, the committed step in lipid A biosynthesis. This chain is UDP-3-O-acyl-N-acetylglucosamine deacetylase, found in Ruthia magnifica subsp. Calyptogena magnifica.